The chain runs to 862 residues: Autotaxin (862 aa).

An N-terminal signal peptide occupies residues 1–27 (MARQGCFGSYQVISLFTFAIGVNLCLG). A propeptide spans 28-35 (FTASRIKR) (removed by furin). Residue N53 is glycosylated (N-linked (GlcNAc...) asparagine). SMB domains lie at 54-97 (TSGS…LKTA) and 98-142 (RGWE…GESH). 10 disulfide bridges follow: C58–C75, C62–C93, C73–C86, C79–C85, C102–C119, C107–C137, C117–C130, C123–C129, C148–C194, and C156–C350. Positions 126 to 128 (RGD) match the Cell attachment site motif. Positions 144 to 501 (VDDDCEEIRV…PTFKYRTKVP (358 aa)) are phosphodiesterase domain. Zn(2+)-binding residues include D171 and T209. Catalysis depends on T209, which acts as the Nucleophile. Positions 209, 230, and 311 each coordinate 1-(9Z-octadecenoyl)-sn-glycero-3-phosphate. Positions 209, 230, and 311 each coordinate 1-hexadecanoyl-sn-glycero-3-phosphate. 1-tetradecanoyl-sn-glycerol 3-phosphate contacts are provided by T209, N230, and D311. Residues D311, H315, D358, and H359 each coordinate Zn(2+). 5 disulfides stabilise this stretch: C366/C468, C413/C805, C566/C666, C568/C651, and C774/C784. The N-linked (GlcNAc...) asparagine glycan is linked to N410. H474 contacts Zn(2+). Residue H474 participates in 1-(9Z-octadecenoyl)-sn-glycero-3-phosphate binding. H474 is a 1-hexadecanoyl-sn-glycero-3-phosphate binding site. H474 provides a ligand contact to 1-tetradecanoyl-sn-glycerol 3-phosphate. N524 is a glycosylation site (N-linked (GlcNAc...) asparagine). Positions 597–862 (LYGRPAVLYR…TYLHTYESEI (266 aa)) are nuclease-like domain. Ca(2+) contacts are provided by D739, N741, N743, L745, and D747. N806 carries N-linked (GlcNAc...) asparagine glycosylation. Residues 829 to 850 (IEHLTGLDFYRKTSRSYSEILT) are required for secretion.

Belongs to the nucleotide pyrophosphatase/phosphodiesterase family. The cofactor is Zn(2+). Requires Ca(2+) as cofactor. N-glycosylation, but not furin-cleavage, plays a critical role on secretion and on lysoPLD activity. Secretion requires simultaneous glycosylation on Asn-53 and Asn-410, while probable glycosylation of Asn-410 has a preferential role on lysoPLD activity. Not O-glycosylated. In terms of processing, the interdomain disulfide bond between Cys-413 and Cys-805 is essential for catalytic activity. Expressed in brain and adipose tissue.

Its subcellular location is the secreted. The catalysed reaction is a 1-O-alkyl-sn-glycero-3-phosphoethanolamine + H2O = a 1-O-alkyl-sn-glycero-3-phosphate + ethanolamine + H(+). It carries out the reaction a 1-acyl-sn-glycero-3-phosphoethanolamine + H2O = a 1-acyl-sn-glycero-3-phosphate + ethanolamine + H(+). The enzyme catalyses 1-(9Z-octadecenoyl)-sn-glycero-3-phosphoethanolamine + H2O = 1-(9Z-octadecenoyl)-sn-glycero-3-phosphate + ethanolamine + H(+). It catalyses the reaction a 1-O-alkyl-sn-glycero-3-phosphocholine + H2O = a 1-O-alkyl-sn-glycero-3-phosphate + choline + H(+). The catalysed reaction is 1-O-(9Z-octadecenyl)-sn-glycero-3-phosphocholine + H2O = 1-O-(9Z-octadecenyl)-sn-glycero-3-phosphate + choline + H(+). It carries out the reaction 1-O-hexadecyl-sn-glycero-3-phosphocholine + H2O = 1-O-hexadecyl-sn-glycero-3-phosphate + choline + H(+). The enzyme catalyses a 1-O-(1Z-alkenyl)-sn-glycero-3-phosphocholine + H2O = a 1-O-(1Z-alkenyl)-sn-glycero-3-phosphate + choline + H(+). It catalyses the reaction a 1-acyl-sn-glycero-3-phosphocholine + H2O = a 1-acyl-sn-glycero-3-phosphate + choline + H(+). The catalysed reaction is 1-dodecanoyl-sn-glycero-3-phosphocholine + H2O = 1-dodecanoyl-sn-glycerol 3-phosphate + choline + H(+). It carries out the reaction 1-(9Z-octadecenoyl)-sn-glycero-3-phosphocholine + H2O = 1-(9Z-octadecenoyl)-sn-glycero-3-phosphate + choline + H(+). The enzyme catalyses 1-tetradecanoyl-sn-glycero-3-phosphocholine + H2O = 1-tetradecanoyl-sn-glycerol 3-phosphate + choline + H(+). It catalyses the reaction 1-decanoyl-sn-glycero-3-phosphocholine + H2O = 1-decanoyl-sn-glycero-3-phosphate + choline + H(+). The catalysed reaction is 1-octadecanoyl-sn-glycero-3-phosphocholine + H2O = 1-octadecanoyl-sn-glycero-3-phosphate + choline + H(+). It carries out the reaction 1-hexadecanoyl-sn-glycero-3-phosphocholine + H2O = 1-hexadecanoyl-sn-glycero-3-phosphate + choline + H(+). The enzyme catalyses 1-hexanoyl-sn-glycero-3-phosphocholine + H2O = 1-hexanoyl-sn-glycero-3-phosphate + choline + H(+). It catalyses the reaction 1-(9Z,12Z)-octadecadienoyl-sn-glycero-3-phosphocholine + H2O = 1-(9Z,12Z)-octadecadienoyl-sn-glycero-3-phosphate + choline + H(+). The catalysed reaction is sphing-4-enine-phosphocholine + H2O = sphing-4-enine 1-phosphate + choline + H(+). It carries out the reaction 1-(5Z,8Z,11Z,14Z-eicosatetraenoyl)-sn-glycero-3-phosphocholine + H2O = 1-(5Z,8Z,11Z,14Z-eicosatetraenoyl)-sn-glycero-3-phosphate + choline + H(+). The enzyme catalyses a 2-acyl-sn-glycero-3-phosphocholine + H2O = a 2-acyl-sn-glycerol 3-phosphate + choline + H(+). It catalyses the reaction a 1,2-diacyl-sn-glycero-3-phosphocholine + H2O = a 1,2-diacyl-sn-glycero-3-phosphate + choline + H(+). The catalysed reaction is 1,2-dioctanoyl-sn-glycero-3-phosphocholine + H2O = 1,2-dioctanoyl-sn-glycero-3-phosphate + choline + H(+). It carries out the reaction 1,2-didecanoyl-sn-glycero-3-phosphocholine + H2O = 1,2-didecanoyl-sn-glycero-3-phosphate + choline + H(+). The enzyme catalyses a 1-acyl-sn-glycero-3-phospho-L-serine + H2O = a 1-acyl-sn-glycero-3-phosphate + L-serine + H(+). It catalyses the reaction 1-(9Z-octadecenoyl)-sn-glycero-3-phospho-L-serine + H2O = 1-(9Z-octadecenoyl)-sn-glycero-3-phosphate + L-serine + H(+). The catalysed reaction is a 2-acyl-sn-glycero-3-phospho-L-serine + H2O = a 2-acyl-sn-glycerol 3-phosphate + L-serine + H(+). Its activity is regulated as follows. Inhibited by EDTA and EGTA. Functionally, secreted lysophospholipase D that hydrolyzes lysophospholipids to produce the signaling molecule lysophosphatidic acid (LPA) in extracellular fluids. Its major substrate is lysophosphatidylcholine. Can also act on sphingosylphosphorylcholine producing sphingosine-1-phosphate, a modulator of cell motility. Can hydrolyze, in vitro, bis-pNPP, to some extent pNP-TMP, and barely ATP. Involved in several motility-related processes such as angiogenesis and neurite outgrowth. Acts as an angiogenic factor by stimulating migration of smooth muscle cells and microtubule formation. Stimulates migration of melanoma cells, probably via a pertussis toxin-sensitive G protein. May have a role in induction of parturition. Possible involvement in cell proliferation and adipose tissue development. Required for LPA production in activated platelets, cleaves the sn-1 lysophospholipids to generate sn-1 lysophosphatidic acids containing predominantly 18:2 and 20:4 fatty acids. Shows a preference for the sn-1 to the sn-2 isomer of 1-O-alkyl-sn-glycero-3-phosphocholine (lyso-PAF). The chain is Autotaxin from Mus musculus (Mouse).